Here is a 908-residue protein sequence, read N- to C-terminus: NADH-quinone oxidoreductase subunit G (908 aa).

One can recognise a 2Fe-2S ferredoxin-type domain in the interval 2–83 (ATIHVDGKEY…GTFISIDDEE (82 aa)). The [2Fe-2S] cluster site is built by cysteine 34, cysteine 45, cysteine 48, and cysteine 67. The 40-residue stretch at 83-122 (EAKQFRESVVEWLMTNHPHDCPVCEEGGNCHLQDMTVMTG) folds into the 4Fe-4S His(Cys)3-ligated-type domain. [4Fe-4S] cluster-binding residues include histidine 99, cysteine 103, cysteine 106, cysteine 112, cysteine 151, cysteine 154, cysteine 157, cysteine 201, cysteine 228, cysteine 231, cysteine 235, and cysteine 263. Residues 221-277 (MQFAPSICQQCSIGCNISPGERYGELRRIENRYNGTVNHYFLCDRGRFGYGYVNLKD) form the 4Fe-4S Mo/W bis-MGD-type domain.

Belongs to the complex I 75 kDa subunit family. Composed of 13 different subunits. Subunits NuoCD, E, F, and G constitute the peripheral sector of the complex. It depends on [2Fe-2S] cluster as a cofactor. [4Fe-4S] cluster is required as a cofactor.

The catalysed reaction is a quinone + NADH + 5 H(+)(in) = a quinol + NAD(+) + 4 H(+)(out). In terms of biological role, NDH-1 shuttles electrons from NADH, via FMN and iron-sulfur (Fe-S) centers, to quinones in the respiratory chain. The immediate electron acceptor for the enzyme in this species is believed to be ubiquinone. Couples the redox reaction to proton translocation (for every two electrons transferred, four hydrogen ions are translocated across the cytoplasmic membrane), and thus conserves the redox energy in a proton gradient. This Escherichia coli O157:H7 protein is NADH-quinone oxidoreductase subunit G (nuoG).